A 26-amino-acid chain; its full sequence is uncharacterized protein (26 aa).

Its subcellular location is the plastid. It localises to the chloroplast. This is an uncharacterized protein from Trieres chinensis (Marine centric diatom).